The sequence spans 156 residues: Transthyretin-like protein 1 (156 aa).

A signal peptide spans 1-17 (MKIALSFLFLTSTFSNA). N151 is a glycosylation site (N-linked (GlcNAc...) asparagine).

It belongs to the nematode transthyretin-like family.

Its subcellular location is the secreted. The protein is Transthyretin-like protein 1 (ttr-1) of Caenorhabditis elegans.